The primary structure comprises 261 residues: (R)-S-adenosyl-L-methionine hydrolase (261 aa).

Adenosine is bound by residues Asp-12, Asp-72, and Asn-187. Residues Asn-187, Ser-231, and Val-239 each contribute to the (R)-S-adenosyl-L-methionine site. Val-239 contributes to the adenosine binding site.

The protein belongs to the SAM hydrolase / SAM-dependent halogenase family.

The enzyme catalyses (R)-S-adenosyl-L-methionine + H2O = adenosine + L-methionine + H(+). Activity is inhibited by chloride. Catalyzes the hydrolysis of S-adenosyl-L-methionine (SAM) into adenosine and L-methionine. Is likely stereoselective, specifically hydrolyzing (R)-S-adenosyl-L-methionine ((R)-SAM), the inactive form of the ubiquitous cofactor SAM, and not the active form of SAM, (S)-S-adenosyl-L-methionine. Probaly plays a role in preventing accumulation of (R)-S-adenosyl-L-methionine in cells; maintenance of (S)-S-denosyl-L-methionine homochirality is important for cellular health given that the (R)-form is largely inactive as a methyl donor and can function as an inhibitor of methyltransferases. Shows very slow iodinase activity in vitro. This is (R)-S-adenosyl-L-methionine hydrolase from Salinispora arenicola (strain CNS-205).